Reading from the N-terminus, the 638-residue chain is Threonine--tRNA ligase (638 aa).

Positions 1–61 constitute a TGS domain; that stretch reads MPDIKLPDGS…EQNADLAIIT (61 aa). Residues 242-533 are catalytic; it reads DHRRLGKQYD…LIENFAGALP (292 aa). 3 residues coordinate Zn(2+): Cys333, His384, and His510.

This sequence belongs to the class-II aminoacyl-tRNA synthetase family. Homodimer. Requires Zn(2+) as cofactor.

The protein resides in the cytoplasm. The enzyme catalyses tRNA(Thr) + L-threonine + ATP = L-threonyl-tRNA(Thr) + AMP + diphosphate + H(+). In terms of biological role, catalyzes the attachment of threonine to tRNA(Thr) in a two-step reaction: L-threonine is first activated by ATP to form Thr-AMP and then transferred to the acceptor end of tRNA(Thr). Also edits incorrectly charged L-seryl-tRNA(Thr). In Dechloromonas aromatica (strain RCB), this protein is Threonine--tRNA ligase.